The chain runs to 44 residues: Thymosin beta-12 (44 aa).

2 stretches are compositionally biased toward basic and acidic residues: residues 1 to 25 (MSDK…ETQE) and 33 to 44 (ETIEQEKAAATS). A disordered region spans residues 1–44 (MSDKPDISEVTSFDKTKLKKTETQEKNPLPSKETIEQEKAAATS). N-acetylserine is present on Ser-2.

The protein belongs to the thymosin beta family.

Its subcellular location is the cytoplasm. It localises to the cytoskeleton. Plays an important role in the organization of the cytoskeleton. Binds to and sequesters actin monomers (G actin) and therefore inhibits actin polymerization. The protein is Thymosin beta-12 of Lateolabrax japonicus (Japanese sea perch).